Consider the following 1749-residue polypeptide: Kinase non-catalytic C-lobe domain-containing protein 1 (1749 aa).

A KIND 1 domain is found at 37-217; the sequence is VSLADILSLR…QDVSESSWRE (181 aa). Disordered regions lie at residues 210–275 and 361–435; these read VSES…SHSR and CRLW…ARQL. Composition is skewed to basic and acidic residues over residues 363-373 and 410-430; these read LWPEQEPEHQL and ADPRDASGEAQTPRDDERIPE. One can recognise a KIND 2 domain in the interval 444-608; it reads VSLQDLLSQL…RASICQVYQE (165 aa). Disordered regions lie at residues 689 to 871 and 962 to 1061; these read ARDQ…RPAD and QASP…GGAS. A compositionally biased stretch (basic and acidic residues) spans 702-717; it reads ERGGQREGEGEEKLSL. Low complexity-rich tracts occupy residues 739 to 748 and 766 to 779; these read QGAAPEPLGA and PANQPEGASSAAPG. Residues 823–833 show a composition bias toward basic residues; that stretch reads HGPRHPPKPPR. Residues 853–871 are compositionally biased toward basic and acidic residues; that stretch reads GERDDQSPDSVPERPRPAD. Phosphoserine is present on S964. A compositionally biased stretch (low complexity) spans 980–990; that stretch reads SQSPRSPSSKR. Over residues 1005–1019 the composition is skewed to polar residues; the sequence is RTSSRAPCSPTSVSD. Positions 1040–1056 are enriched in basic and acidic residues; it reads VKAERAQQPEAGEDRRP. The stretch at 1133 to 1190 forms a coiled coil; it reads QQLMMEKRNYRKTLKFYQKLLQKEKRNKGSDVKTMLSKLKGQLEEMKSRVQFLSLVKK. Positions 1246 to 1371 constitute an N-terminal Ras-GEF domain; sequence KARILQAGTP…HLLGLLEVGM (126 aa). Positions 1468 to 1719 constitute a Ras-GEF domain; the sequence is STHQLFSQLT…SGADISTLAA (252 aa).

In terms of assembly, interacts (via KIND2) with MAP2; the interaction enhances MAP2 phosphorylation and localizes KNDC1 to dendrites. As to expression, expressed specifically in the cerebral cortex.

The protein resides in the cell projection. The protein localises to the dendrite. It localises to the perikaryon. Functionally, RAS-Guanine nucleotide exchange factor (GEF) that controls the negative regulation of neuronal dendrite growth by mediating a signaling pathway linking RAS and MAP2. May be involved in cellular senescence. The protein is Kinase non-catalytic C-lobe domain-containing protein 1 of Homo sapiens (Human).